Consider the following 522-residue polypeptide: Target of rapamycin complex 2 subunit MAPKAP1 (522 aa).

An N-acetylalanine modification is found at Ala-2. The interval 2 to 184 (AFLDNPTIIL…KKIDVYLPLH (183 aa)) is interaction with MAP3K2. Residues 2-267 (AFLDNPTIIL…GFSTLALVEK (266 aa)) are interaction with NBN. Residues 38-59 (LEKTHPPSVPGDSGSEVQGSSG) are disordered. A Phosphothreonine modification is found at Thr-86. Phosphoserine is present on residues Ser-128, Ser-186, Ser-315, and Ser-356. A CRIM domain is found at 139–267 (QSILSVRLEQ…GFSTLALVEK (129 aa)). The segment at 279-353 (LFVRINAAHG…QNAWEFCLVR (75 aa)) is SIN1-type RBD. An SIN1-type PH domain is found at 382–487 (HYKSFKVSMI…IVLKVNYILE (106 aa)). Arg-393 provides a ligand contact to a 1,2-diacyl-sn-glycero-3-phospho-(1D-myo-inositol-3,4,5-trisphosphate). Thr-398 bears the Phosphothreonine mark. 2 residues coordinate a 1,2-diacyl-sn-glycero-3-phospho-(1D-myo-inositol-3,4,5-trisphosphate): Lys-428 and Lys-464. The tract at residues 468–522 (FESDAATVSEIVLKVNYILESRASTARADYFAQKQRKLNRRTSFSFQKEKKSGQQ) is interaction with ATF2. Residue Ser-510 is modified to Phosphoserine.

Belongs to the SIN1 family. In terms of assembly, component of the mechanistic target of rapamycin complex 2 (mTORC2), consisting in two heterotretramers composed of MTOR, MLST8, RICTOR and MAPKAP1/SIN1. The mTORC2 core complex associates with PRR5/PROTOR1 and/or PRR5L/PROTOR2. Contrary to mTORC1, mTORC2 does not bind to and is not sensitive to FKBP12-rapamycin. Interacts with MAP3K2. Interacts with ATF2. Interacts with MAPK8. Interacts with GTP-bound HRAS and KRAS; inhibiting their activity. Interacts with IFNAR2. Post-translationally, phosphorylation at Ser-128 by PKC promotes relocalization to the perinuclear region, where the mTORC2 complex specifically mediates phosphorylation of SGK1. Phosphorylated at Thr-86 by AKT1 or RPS6KB1 in the presence of growth factors; the effect of this phosphorylation is however unclear. According to two studies, phosphorylation at Thr-86 by AKT1 is part of a positive feedback loop that increases mTORC2 activation. According to another study, phosphorylation at Thr-86 and Thr-398 by RPS6KB1 promotes dissociation from the mTORC2 complex, leading to inhibit mTORC2 signaling.

The protein localises to the cell membrane. It is found in the endoplasmic reticulum membrane. It localises to the early endosome membrane. Its subcellular location is the late endosome membrane. The protein resides in the lysosome membrane. The protein localises to the golgi apparatus membrane. It is found in the mitochondrion outer membrane. It localises to the cytoplasm. Its subcellular location is the perinuclear region. The protein resides in the nucleus. Phosphatidylinositol 3,4,5-trisphosphate (PI(3,4,5)P3) promotes MTOR activation by relieving MAPKAP1/SIN1-mediated inhibition of MTOR that takes place in absence of PI(3,4,5)P3. Functionally, component of the mechanistic target of rapamycin complex 2 (mTORC2), which transduces signals from growth factors to pathways involved in proliferation, cytoskeletal organization, lipogenesis and anabolic output. In response to growth factors, mTORC2 phosphorylates and activates AGC protein kinase family members, including AKT (AKT1, AKT2 and AKT3), PKC (PRKCA, PRKCB and PRKCE) and SGK1. In contrast to mTORC1, mTORC2 is nutrient-insensitive. Within the mTORC2 complex, MAPKAP1/SIN1 acts as a substrate adapter which recognizes and binds AGC protein kinase family members for phosphorylation by MTOR. mTORC2 plays a critical role in AKT1 activation by mediating phosphorylation of different sites depending on the context, such as 'Thr-450', 'Ser-473', 'Ser-477' or 'Thr-479', facilitating the phosphorylation of the activation loop of AKT1 on 'Thr-308' by PDPK1/PDK1 which is a prerequisite for full activation. mTORC2 catalyzes the phosphorylation of SGK1 at 'Ser-422' and of PRKCA on 'Ser-657'. The mTORC2 complex also phosphorylates various proteins involved in insulin signaling, such as FBXW8 and IGF2BP1. mTORC2 acts upstream of Rho GTPases to regulate the actin cytoskeleton, probably by activating one or more Rho-type guanine nucleotide exchange factors. mTORC2 promotes the serum-induced formation of stress-fibers or F-actin. MAPKAP1 inhibits MAP3K2 by preventing its dimerization and autophosphorylation. Inhibits HRAS and KRAS independently of mTORC2 complex. Enhances osmotic stress-induced phosphorylation of ATF2 and ATF2-mediated transcription. Involved in ciliogenesis, regulates cilia length through its interaction with CCDC28B independently of mTORC2 complex. In Rattus norvegicus (Rat), this protein is Target of rapamycin complex 2 subunit MAPKAP1.